An 80-amino-acid polypeptide reads, in one-letter code: Probable Rubredoxin-1 (80 aa).

Residues 19–72 (YRKYKCKVCGWVYDPLKGDPSQNIPPKTPFEELPDTWICPVCRGKVGKESFEPL) form the Rubredoxin-like domain. Residues C24, C27, C57, and C60 each coordinate Fe cation.

It belongs to the rubredoxin family. Requires Fe(3+) as cofactor.

Functionally, rubredoxin is a small nonheme, iron protein lacking acid-labile sulfide. Its single Fe, chelated to 4 Cys, functions as an electron acceptor and may also stabilize the conformation of the molecule. The protein is Probable Rubredoxin-1 of Methanocaldococcus jannaschii (strain ATCC 43067 / DSM 2661 / JAL-1 / JCM 10045 / NBRC 100440) (Methanococcus jannaschii).